A 1368-amino-acid chain; its full sequence is DNA-directed RNA polymerase subunit beta (1368 aa).

The protein belongs to the RNA polymerase beta chain family. In terms of assembly, the RNAP catalytic core consists of 2 alpha, 1 beta, 1 beta' and 1 omega subunit. When a sigma factor is associated with the core the holoenzyme is formed, which can initiate transcription.

The enzyme catalyses RNA(n) + a ribonucleoside 5'-triphosphate = RNA(n+1) + diphosphate. Functionally, DNA-dependent RNA polymerase catalyzes the transcription of DNA into RNA using the four ribonucleoside triphosphates as substrates. In Burkholderia ambifaria (strain ATCC BAA-244 / DSM 16087 / CCUG 44356 / LMG 19182 / AMMD) (Burkholderia cepacia (strain AMMD)), this protein is DNA-directed RNA polymerase subunit beta.